Here is a 347-residue protein sequence, read N- to C-terminus: Farnesyl pyrophosphate synthase ERG20 (347 aa).

The isopentenyl diphosphate site is built by K50, R53, and Q88. D95 and D99 together coordinate Mg(2+). Dimethylallyl diphosphate is bound at residue R104. R105 serves as a coordination point for isopentenyl diphosphate. Dimethylallyl diphosphate is bound by residues K192, T193, Q232, K249, and K258.

Belongs to the FPP/GGPP synthase family. The cofactor is Mg(2+).

It catalyses the reaction isopentenyl diphosphate + dimethylallyl diphosphate = (2E)-geranyl diphosphate + diphosphate. The enzyme catalyses isopentenyl diphosphate + (2E)-geranyl diphosphate = (2E,6E)-farnesyl diphosphate + diphosphate. It participates in isoprenoid biosynthesis; farnesyl diphosphate biosynthesis; farnesyl diphosphate from geranyl diphosphate and isopentenyl diphosphate: step 1/1. Its pathway is isoprenoid biosynthesis; geranyl diphosphate biosynthesis; geranyl diphosphate from dimethylallyl diphosphate and isopentenyl diphosphate: step 1/1. In terms of biological role, farnesyl pyrophosphate synthase; part of the second module of ergosterol biosynthesis pathway that includes the middle steps of the pathway. ERG20 catalyzes the sequential condensation of isopentenyl pyrophosphate with dimethylallyl pyrophosphate, and then with the resultant geranylpyrophosphate to the ultimate product farnesyl pyrophosphate. The second module is carried out in the vacuole and involves the formation of farnesyl diphosphate, which is also an important intermediate in the biosynthesis of ubiquinone, dolichol, heme and prenylated proteins. Activity by the mevalonate kinase ERG12 (FG05912) first converts mevalonate into 5-phosphomevalonate. 5-phosphomevalonate is then further converted to 5-diphosphomevalonate by the phosphomevalonate kinase ERG8 (FG09764). The diphosphomevalonate decarboxylase ERG19 (FG10424) then produces isopentenyl diphosphate. The isopentenyl-diphosphate delta-isomerase IDI1 (FG09722) then catalyzes the 1,3-allylic rearrangement of the homoallylic substrate isopentenyl (IPP) to its highly electrophilic allylic isomer, dimethylallyl diphosphate (DMAPP). Finally the farnesyl diphosphate synthase ERG20 (FG06784) catalyzes the sequential condensation of isopentenyl pyrophosphate with dimethylallyl pyrophosphate, and then with the resultant geranylpyrophosphate to the ultimate product farnesyl pyrophosphate. The sequence is that of Farnesyl pyrophosphate synthase ERG20 from Gibberella zeae (strain ATCC MYA-4620 / CBS 123657 / FGSC 9075 / NRRL 31084 / PH-1) (Wheat head blight fungus).